Here is a 335-residue protein sequence, read N- to C-terminus: Phosphate acyltransferase (335 aa).

It belongs to the PlsX family. Homodimer. Probably interacts with PlsY.

It is found in the cytoplasm. It carries out the reaction a fatty acyl-[ACP] + phosphate = an acyl phosphate + holo-[ACP]. It functions in the pathway lipid metabolism; phospholipid metabolism. Its function is as follows. Catalyzes the reversible formation of acyl-phosphate (acyl-PO(4)) from acyl-[acyl-carrier-protein] (acyl-ACP). This enzyme utilizes acyl-ACP as fatty acyl donor, but not acyl-CoA. The polypeptide is Phosphate acyltransferase (Clostridium botulinum (strain Loch Maree / Type A3)).